The following is a 365-amino-acid chain: Tubulin-like protein CetZ (365 aa).

GTP-binding positions include 10–14 (QCGGK), 103–105 (GTG), Glu-136, Asn-163, and Asn-181.

The protein belongs to the CetZ family.

It is found in the cytoplasm. Involved in cell shape control. The polypeptide is Tubulin-like protein CetZ (Pyrococcus abyssi (strain GE5 / Orsay)).